The following is a 582-amino-acid chain: External alternative NAD(P)H-ubiquinone oxidoreductase B4, mitochondrial (582 aa).

A mitochondrion-targeting transit peptide spans 1-39 (MSFHSFYQRASSLFKAYPSTSKILLLSTFSGGGGVLVYS). Residue 65 to 95 (KVVVLGSGWSGYSFLSYLNNPNYDVQVVSPR) coordinates FAD. Residue 227 to 263 (LHFVVVGGGPTGVEFSAELHDFLVQDVAKIYPKVQEF) participates in NAD(+) binding. The region spanning 384 to 419 (RVMEDIAAIFNKADKGNTGTLKKKDFNSVVKDICQR) is the EF-hand domain. 4 residues coordinate Ca(2+): aspartate 397, threonine 401, threonine 403, and aspartate 408. Positions 573–582 (FVFGRDSSSI) match the Microbody targeting signal motif.

Belongs to the NADH dehydrogenase family. FAD is required as a cofactor. As to expression, expressed in seedlings, roots, cotyledons, stems, buds and flowers and, to a lower extent, in stems and leaves.

The protein resides in the mitochondrion inner membrane. It localises to the peroxisome. It catalyses the reaction a quinone + NADH + H(+) = a quinol + NAD(+). The enzyme catalyses a ubiquinone + NADH + H(+) = a ubiquinol + NAD(+). No effect of calcium ions on activity. Functionally, alternative NADH-ubiquinone oxidoreductase which catalyzes the oxidation of mitochondrial NADH does not translocate protons across the inner mitochondrial membrane. NAD(P)H dehydrogenase; more efficient on NADH. The sequence is that of External alternative NAD(P)H-ubiquinone oxidoreductase B4, mitochondrial (NDB4) from Arabidopsis thaliana (Mouse-ear cress).